The sequence spans 258 residues: Large ribosomal subunit protein uL5c (258 aa).

Residues 1-38 (MASTSLLQSTSSSFAGVRFHCRTSAAPRVGLSSFTVKA) constitute a chloroplast transit peptide.

In terms of assembly, component of the chloroplast large ribosomal subunit (LSU). Mature 70S chloroplast ribosomes of higher plants consist of a small (30S) and a large (50S) subunit. The 30S small subunit contains 1 molecule of ribosomal RNA (16S rRNA) and 24 different proteins. The 50S large subunit contains 3 rRNA molecules (23S, 5S and 4.5S rRNA) and 33 different proteins.

The protein localises to the plastid. Its subcellular location is the chloroplast. Functionally, component of the chloroplast ribosome (chloro-ribosome), a dedicated translation machinery responsible for the synthesis of chloroplast genome-encoded proteins, including proteins of the transcription and translation machinery and components of the photosynthetic apparatus. The polypeptide is Large ribosomal subunit protein uL5c (RPL5) (Spinacia oleracea (Spinach)).